Here is a 206-residue protein sequence, read N- to C-terminus: Isochorismatase domain-containing protein 2A (206 aa).

Lys26 is subject to N6-succinyllysine. N6-acetyllysine; alternate is present on residues Lys93 and Lys178. N6-succinyllysine; alternate is present on residues Lys93 and Lys178. An N6-acetyllysine mark is found at Lys182 and Lys185.

The protein belongs to the isochorismatase family. As to quaternary structure, interacts with CDKN2A. As to expression, ubiquitous. Expressed predominantly in uterus, stomach and urinary tract.

The protein localises to the cytoplasm. The protein resides in the nucleus. This chain is Isochorismatase domain-containing protein 2A, found in Mus musculus (Mouse).